A 187-amino-acid polypeptide reads, in one-letter code: ATP synthase subunit b, chloroplastic (187 aa).

A helical membrane pass occupies residues 34-56; that stretch reads IINLSVVLGLVFTLGRNFLISLL.

Belongs to the ATPase B chain family. In terms of assembly, F-type ATPases have 2 components, F(1) - the catalytic core - and F(0) - the membrane proton channel. F(1) has five subunits: alpha(3), beta(3), gamma(1), delta(1), epsilon(1). F(0) has four main subunits: a(1), b(1), b'(1) and c(10-14). The alpha and beta chains form an alternating ring which encloses part of the gamma chain. F(1) is attached to F(0) by a central stalk formed by the gamma and epsilon chains, while a peripheral stalk is formed by the delta, b and b' chains.

It localises to the plastid. The protein localises to the chloroplast thylakoid membrane. Its function is as follows. F(1)F(0) ATP synthase produces ATP from ADP in the presence of a proton or sodium gradient. F-type ATPases consist of two structural domains, F(1) containing the extramembraneous catalytic core and F(0) containing the membrane proton channel, linked together by a central stalk and a peripheral stalk. During catalysis, ATP synthesis in the catalytic domain of F(1) is coupled via a rotary mechanism of the central stalk subunits to proton translocation. Functionally, component of the F(0) channel, it forms part of the peripheral stalk, linking F(1) to F(0). The sequence is that of ATP synthase subunit b, chloroplastic from Pleurastrum terricola (Filamentous green alga).